A 136-amino-acid polypeptide reads, in one-letter code: Nucleoside diphosphate kinase (136 aa).

ATP contacts are provided by K10, F58, R86, T92, R104, and N114. Residue H117 is the Pros-phosphohistidine intermediate of the active site.

Belongs to the NDK family. Homotetramer. Mg(2+) serves as cofactor.

The protein resides in the cytoplasm. The enzyme catalyses a 2'-deoxyribonucleoside 5'-diphosphate + ATP = a 2'-deoxyribonucleoside 5'-triphosphate + ADP. It carries out the reaction a ribonucleoside 5'-diphosphate + ATP = a ribonucleoside 5'-triphosphate + ADP. Its function is as follows. Major role in the synthesis of nucleoside triphosphates other than ATP. The ATP gamma phosphate is transferred to the NDP beta phosphate via a ping-pong mechanism, using a phosphorylated active-site intermediate. The chain is Nucleoside diphosphate kinase from Corynebacterium diphtheriae (strain ATCC 700971 / NCTC 13129 / Biotype gravis).